We begin with the raw amino-acid sequence, 498 residues long: Angiopoietin-1 (498 aa).

The first 19 residues, 1-19 (MTVFLSFAFFAAILTHIGC), serve as a signal peptide directing secretion. The stretch at 81–119 (QKLQHLEHVMENYTQWLQKLENYIVENMKSEMAQIQQNA) forms a coiled coil. 5 N-linked (GlcNAc...) asparagine glycosylation sites follow: asparagine 92, asparagine 122, asparagine 154, asparagine 243, and asparagine 295. Positions 153 to 261 (LNQTSRLEIQ…LELMDTVHNL (109 aa)) form a coiled coil. One can recognise a Fibrinogen C-terminal domain in the interval 277–497 (REEEKPFRDC…STTMMIRPLD (221 aa)). 2 disulfides stabilise this stretch: cysteine 286–cysteine 315 and cysteine 439–cysteine 452.

As to quaternary structure, homooligomer. Interacts with TEK/TIE2. Interacts with SVEP1/polydom. Interacts with THBD; this interaction significantly inhibits the generation of activated PC and TAFIa/CPB2 by the thrombin/thrombomodulin complex.

The protein resides in the secreted. Binds and activates TEK/TIE2 receptor by inducing its dimerization and tyrosine phosphorylation. Plays an important role in the regulation of angiogenesis, endothelial cell survival, proliferation, migration, adhesion and cell spreading, reorganization of the actin cytoskeleton, but also maintenance of vascular quiescence. Required for normal angiogenesis and heart development during embryogenesis. After birth, activates or inhibits angiogenesis, depending on the context. Inhibits angiogenesis and promotes vascular stability in quiescent vessels, where endothelial cells have tight contacts. In quiescent vessels, ANGPT1 oligomers recruit TEK to cell-cell contacts, forming complexes with TEK molecules from adjoining cells, and this leads to preferential activation of phosphatidylinositol 3-kinase and the AKT1 signaling cascades. In migrating endothelial cells that lack cell-cell adhesions, ANGT1 recruits TEK to contacts with the extracellular matrix, leading to the formation of focal adhesion complexes, activation of PTK2/FAK and of the downstream kinases MAPK1/ERK2 and MAPK3/ERK1, and ultimately to the stimulation of sprouting angiogenesis. Mediates blood vessel maturation/stability. Implicated in endothelial developmental processes later and distinct from that of VEGF. Appears to play a crucial role in mediating reciprocal interactions between the endothelium and surrounding matrix and mesenchyme. The chain is Angiopoietin-1 (Angpt1) from Mus musculus (Mouse).